The sequence spans 337 residues: DNA-directed RNA polymerase subunit alpha (337 aa).

Positions 1-233 are alpha N-terminal domain (alpha-NTD); the sequence is MVREEIAEST…DLFVPFLHAE (233 aa). Positions 266–337 are alpha C-terminal domain (alpha-CTD); it reads GIPLKYIFID…FAVDLPKVLI (72 aa).

It belongs to the RNA polymerase alpha chain family. In terms of assembly, in plastids the minimal PEP RNA polymerase catalytic core is composed of four subunits: alpha, beta, beta', and beta''. When a (nuclear-encoded) sigma factor is associated with the core the holoenzyme is formed, which can initiate transcription.

The protein resides in the plastid. It localises to the chloroplast. It carries out the reaction RNA(n) + a ribonucleoside 5'-triphosphate = RNA(n+1) + diphosphate. Functionally, DNA-dependent RNA polymerase catalyzes the transcription of DNA into RNA using the four ribonucleoside triphosphates as substrates. The polypeptide is DNA-directed RNA polymerase subunit alpha (Dioscorea elephantipes (Elephant's foot yam)).